Reading from the N-terminus, the 491-residue chain is Sucrose transport protein SUC9 (491 aa).

Residues 1–12 (MSDIQAKEDAAP) show a composition bias toward basic and acidic residues. Residues 1–26 (MSDIQAKEDAAPVDRQSSSSVVVPDE) form a disordered region. At 1 to 33 (MSDIQAKEDAAPVDRQSSSSVVVPDEPSPLRKM) the chain is on the cytoplasmic side. At Ser17 the chain carries Phosphoserine. The chain crosses the membrane as a helical span at residues 34 to 54 (ISVASIAAGIQFGWALQLSLL). The Extracellular segment spans residues 55-68 (TPYVQLLGVPHKWS). The chain crosses the membrane as a helical span at residues 69–89 (SFIWLCGPISGLLVQPTVGYF). Topologically, residues 90 to 101 (SDRCKSRFGRRR) are cytoplasmic. A helical transmembrane segment spans residues 102 to 122 (PFIATGALLVALAVILIGFAA). Over 123–139 (DFGHTMGDKLDEAVKIR) the chain is Extracellular. A helical transmembrane segment spans residues 140 to 160 (AVGFFVVGFWILDVANNTLQG). Over 161–181 (PCRAFLGDLAAGDAKKTRTAN) the chain is Cytoplasmic. The helical transmembrane segment at 182-202 (AIFSFFMAVGNVLGYAAGSYT) threads the bilayer. The Extracellular portion of the chain corresponds to 203 to 224 (NLHKIFPFTVTKACDIYCANLK). The chain crosses the membrane as a helical span at residues 225–245 (SCFIISITLLIVLTIIALWYV). Residues 246–277 (EDKQWSPNADSDNEKTPFFGEIFGAFKVMKRP) lie on the Cytoplasmic side of the membrane. The helical transmembrane segment at 278–298 (MWMLLAVTALNWIAWFPFLLY) threads the bilayer. Residues 299–329 (DTDWMGREVYGGDSAGDDKMKKLYNHGIQVG) lie on the Extracellular side of the membrane. The helical transmembrane segment at 330-350 (SLGLMLNSIVLGVMSLVIGVI) threads the bilayer. At 351 to 358 (SKKIGAKR) the chain is on the cytoplasmic side. Residues 359 to 379 (LWGAVNIILAVCLAMTVLVTK) traverse the membrane as a helical segment. Residues 380-406 (KAEEHRKIAGRMALPTNAIRDGALSLF) lie on the Extracellular side of the membrane. The helical transmembrane segment at 407-427 (AILGIPLAITFSIPFALASII) threads the bilayer. The Cytoplasmic portion of the chain corresponds to 428 to 443 (SSSSGAGQGLSLGVLN). A helical transmembrane segment spans residues 444 to 464 (MAIVIPQMIVSFGVGPIDALF). Residues 465–468 (GGGN) are Extracellular-facing. The helical transmembrane segment at 469-489 (LPGFVVGAIAALISSVVALTV) threads the bilayer. The Cytoplasmic segment spans residues 490–491 (LP).

This sequence belongs to the glycoside-pentoside-hexuronide (GPH) cation symporter transporter (TC 2.A.2.4) family. As to expression, widely expressed.

The protein resides in the cell membrane. It catalyses the reaction sucrose(out) + H(+)(out) = sucrose(in) + H(+)(in). The protein operates within glycan biosynthesis; sucrose metabolism. Its activity is regulated as follows. Inhibited by protonophores (e.g. carbonyl cyanide m-chlorophenyl-hydrazone (CCCP)) and SH group inhibitors (e.g. p-chloromercuribenzene sulphonic acid (PCMBS)). High-affinity sucrose transporter. Responsible for the transport of sucrose into the cell, with the concomitant uptake of protons (symport system). Can also transport a wide range of glucosides, such as helicin, salicin, arbutin, maltose, fraxin, esculin, uranose, alpha-methylglucoside, alpha-phenylglucoside and beta-phenylglucoside. Plays a role in flowering time transition delay. The sequence is that of Sucrose transport protein SUC9 from Arabidopsis thaliana (Mouse-ear cress).